Here is a 150-residue protein sequence, read N- to C-terminus: Arginine repressor (150 aa).

It belongs to the ArgR family.

The protein resides in the cytoplasm. The protein operates within amino-acid biosynthesis; L-arginine biosynthesis [regulation]. Its function is as follows. Regulates arginine biosynthesis genes. The sequence is that of Arginine repressor from Staphylococcus haemolyticus (strain JCSC1435).